The primary structure comprises 338 residues: Secretory carrier-associated membrane protein 1 (338 aa).

The interval 1 to 64 (MSDFDSNPFA…NVPNTQPAIM (64 aa)) is disordered. Position 2 is an N-acetylserine (serine 2). Residue serine 2 is modified to Phosphoserine. The Cytoplasmic portion of the chain corresponds to 2–155 (SDFDSNPFAD…QKTVKLMYYL (154 aa)). Threonine 45 bears the Phosphothreonine mark. The helical transmembrane segment at 156 to 176 (WMFHAVTLFLNIFGCLAWFCV) threads the bilayer. Residues 177 to 181 (DSSRA) lie on the Lumenal side of the membrane. A helical transmembrane segment spans residues 182–202 (VDFGLSILWFLLFTPCSFVCW). The Cytoplasmic segment spans residues 203–218 (YRPLYGAFRSDSSFRF). The chain crosses the membrane as a helical span at residues 219 to 239 (FVFFFVYICQFAVHVLQAAGF). Topologically, residues 240-261 (HNWGNCGWISSLTGLNKNIPVG) are lumenal. A helical transmembrane segment spans residues 262–282 (IMMIIIAALFTASAVISLVMF). Topologically, residues 283–338 (KKVHGLYRTTGASFEKAQQEFATGVMSNKTVQTAAANAASTAATSAAQNAFKGNQM) are cytoplasmic.

This sequence belongs to the SCAMP family. As to quaternary structure, interacts with SYNRG, ITSN1 and SLC9A7.

It localises to the golgi apparatus. The protein resides in the trans-Golgi network membrane. It is found in the recycling endosome membrane. Functionally, functions in post-Golgi recycling pathways. Acts as a recycling carrier to the cell surface. The sequence is that of Secretory carrier-associated membrane protein 1 (Scamp1) from Mus musculus (Mouse).